The primary structure comprises 477 residues: Argininosuccinate lyase (477 aa).

This sequence belongs to the lyase 1 family. Argininosuccinate lyase subfamily.

It is found in the cytoplasm. It catalyses the reaction 2-(N(omega)-L-arginino)succinate = fumarate + L-arginine. It functions in the pathway amino-acid biosynthesis; L-arginine biosynthesis; L-arginine from L-ornithine and carbamoyl phosphate: step 3/3. This chain is Argininosuccinate lyase, found in Corynebacterium efficiens (strain DSM 44549 / YS-314 / AJ 12310 / JCM 11189 / NBRC 100395).